We begin with the raw amino-acid sequence, 357 residues long: Guanine nucleotide-binding protein alpha-16 subunit (357 aa).

The N-myristoyl glycine moiety is linked to residue glycine 2. Cysteine 3 carries S-palmitoyl cysteine lipidation. The G-alpha domain maps to 32-357 (RTIKLLLLGA…RDNLRTCGLY (326 aa)). The segment at 35-48 (KLLLLGAGESGKST) is G1 motif. GTP is bound by residues 40 to 47 (GAGESGKS), 175 to 181 (LRTRIKT), 200 to 204 (DVGGQ), 269 to 272 (NKKD), and alanine 329. The Mg(2+) site is built by serine 47 and threonine 181. The tract at residues 173–181 (DILRTRIKT) is G2 motif. A G3 motif region spans residues 196–205 (FLVFDVGGQR). The tract at residues 265–272 (ILFLNKKD) is G4 motif. Residues 327–332 (TCATDT) form a G5 motif region.

It belongs to the G-alpha family. G proteins are composed of 3 units; alpha, beta and gamma. The alpha chain contains the guanine nucleotide binding site.

In terms of biological role, guanine nucleotide-binding proteins (G proteins) are involved as modulators or transducers in various transmembrane signaling systems. In the 1-cell embryo, probably together with goa-1, controls nuclear rotation and spindle elongation during mitosis. During the first embryonic cell divisons, plays a role in gpr-1/2 cortical localization and in the proper orientation of EMS blastomere mitotic spindle. This Caenorhabditis elegans protein is Guanine nucleotide-binding protein alpha-16 subunit (gpa-16).